A 580-amino-acid chain; its full sequence is Glutathione hydrolase proenzyme (580 aa).

Residues 1 to 25 (MIKPTFLRRVAIAALLSGSCFSAAA) form the signal peptide. Arginine 114 lines the L-glutamate pocket. The active-site Nucleophile is threonine 391. L-glutamate is bound by residues threonine 409, asparagine 411, glutamine 430, aspartate 433, 462–463 (SS), and 483–484 (GG). The disordered stretch occupies residues 561–580 (DGELYGASDPRSVDDLTAGY).

This sequence belongs to the gamma-glutamyltransferase family. In terms of assembly, this enzyme consists of two polypeptide chains, which are synthesized in precursor form from a single polypeptide. In terms of processing, cleaved by autocatalysis into a large and a small subunit.

It is found in the periplasm. It carries out the reaction an N-terminal (5-L-glutamyl)-[peptide] + an alpha-amino acid = 5-L-glutamyl amino acid + an N-terminal L-alpha-aminoacyl-[peptide]. The catalysed reaction is glutathione + H2O = L-cysteinylglycine + L-glutamate. The enzyme catalyses an S-substituted glutathione + H2O = an S-substituted L-cysteinylglycine + L-glutamate. It functions in the pathway sulfur metabolism; glutathione metabolism. With respect to regulation, transferase and hydrolase activities are inhibited by L-Ala and L-Gln, and also by GGT affinity labeling reagents such as azaserine and 6-diazo-5-oxo-nor-leucine. In terms of biological role, cleaves the gamma-glutamyl bond of periplasmic glutathione (gamma-Glu-Cys-Gly), glutathione conjugates, and other gamma-glutamyl compounds. The metabolism of glutathione releases free glutamate and the dipeptide cysteinyl-glycine, which is hydrolyzed to cysteine and glycine by dipeptidases; it may function in amino acid uptake/salvage, or possibly in peptidoglycan linkage. Catalyzes the hydrolysis and transpeptidation of many gamma-glutamyl compounds (including some D-gamma-glutamyl substrates), with a preference for basic and aromatic amino acids as acceptors. The KM values for gamma-glutamyl acceptors are so high that it has been proposed transpeptidation is not the physiological role in E.coli. In Escherichia coli (strain K12), this protein is Glutathione hydrolase proenzyme (ggt).